A 334-amino-acid chain; its full sequence is Malate dehydrogenase 2 (334 aa).

Residue 12–18 (GAAGRVA) participates in NAD(+) binding. The substrate site is built by R93 and R99. Residues N106, Q113, and 130 to 132 (VGN) each bind NAD(+). Residues N132 and R166 each contribute to the substrate site. H191 functions as the Proton acceptor in the catalytic mechanism.

This sequence belongs to the LDH/MDH superfamily. MDH type 2 family.

It carries out the reaction (S)-malate + NAD(+) = oxaloacetate + NADH + H(+). In terms of biological role, catalyzes the reversible oxidation of malate to oxaloacetate. This is Malate dehydrogenase 2 from Albidiferax ferrireducens (strain ATCC BAA-621 / DSM 15236 / T118) (Rhodoferax ferrireducens).